The primary structure comprises 218 residues: DNA endonuclease I-ChuI (218 aa).

The protein belongs to the LAGLIDADG endonuclease family.

The protein resides in the plastid. The protein localises to the chloroplast. In terms of biological role, probable endonuclease involved in intron homing. Encoded in the group-I intron of the subunit rRNA-encoding gene (rrnL), it generates a staggered cut with 4-nt (CTCG) 3'-OH overhangs 2 bp downstream from the intron insertion site. This chain is DNA endonuclease I-ChuI, found in Chlamydomonas applanata (Chlamydomonas humicola).